Consider the following 245-residue polypeptide: 2,3-bisphosphoglycerate-dependent phosphoglycerate mutase (245 aa).

Substrate contacts are provided by residues 9–16 (RHGESEWN), 22–23 (TG), R61, 88–91 (ERHY), K99, 115–116 (RR), and 181–182 (GN). The active-site Tele-phosphohistidine intermediate is H10. The active-site Proton donor/acceptor is E88.

It belongs to the phosphoglycerate mutase family. BPG-dependent PGAM subfamily.

The catalysed reaction is (2R)-2-phosphoglycerate = (2R)-3-phosphoglycerate. It functions in the pathway carbohydrate degradation; glycolysis; pyruvate from D-glyceraldehyde 3-phosphate: step 3/5. Its function is as follows. Catalyzes the interconversion of 2-phosphoglycerate and 3-phosphoglycerate. The sequence is that of 2,3-bisphosphoglycerate-dependent phosphoglycerate mutase from Nocardia farcinica (strain IFM 10152).